Consider the following 359-residue polypeptide: S-adenosylmethionine-dependent nucleotide dehydratase RSAD2 (359 aa).

Residues glutamine 43–phenylalanine 67 are disordered. Positions serine 50–serine 63 are enriched in basic and acidic residues. The Radical SAM core domain occupies phenylalanine 67–leucine 287. 3 residues coordinate [4Fe-4S] cluster: cysteine 81, cysteine 85, and cysteine 88.

It belongs to the radical SAM superfamily. RSAD2 family. [4Fe-4S] cluster is required as a cofactor.

It is found in the endoplasmic reticulum membrane. Interferon-inducible iron-sulfur (4FE-4S) cluster-binding antiviral protein which plays a major role in the cell antiviral state induced by type I and type II interferon. In Danio rerio (Zebrafish), this protein is S-adenosylmethionine-dependent nucleotide dehydratase RSAD2.